We begin with the raw amino-acid sequence, 155 residues long: Small ribosomal subunit protein uS7 (155 aa).

The protein belongs to the universal ribosomal protein uS7 family. As to quaternary structure, part of the 30S ribosomal subunit. Contacts proteins S9 and S11.

One of the primary rRNA binding proteins, it binds directly to 16S rRNA where it nucleates assembly of the head domain of the 30S subunit. Is located at the subunit interface close to the decoding center, probably blocks exit of the E-site tRNA. This chain is Small ribosomal subunit protein uS7, found in Chlorobium phaeobacteroides (strain BS1).